The primary structure comprises 140 residues: Profilin (140 aa).

It belongs to the profilin family. In terms of assembly, occurs in many kinds of cells as a complex with monomeric actin in a 1:1 ratio.

In terms of biological role, binds to actin and affects the structure of the cytoskeleton. At high concentrations, profilin prevents the polymerization of actin, whereas it enhances it at low concentrations. By binding to PIP2, it inhibits the formation of IP3 and DG. This is Profilin from Suberites domuncula (Sponge).